We begin with the raw amino-acid sequence, 384 residues long: MRVLGLMSGTSADGVDAVLVELSGSADHPRWSLLRSASLDYPTSTRQLILAVGQGEAKTASSLLNLSETITKIQAAAALQCDPEEQAQLVGCHGQTLWHRPPKRAGTGELQRGASWQMLQAPLLAQLLNRPVIFDFRAADLALGGQGAPLVPKADAALLGRTKGWRALLNLGGIANLTLIPPDAGPDRLQPVRGWDCGPANSLIDLAMEQFSEGEESCDQGGRLAETGHCDEALILRWLAEPYFQLNPPKSTGREVFGRADLTRRLRDMQGQPIANQIATLTAFSAAVVAQDLQQLSNQNHPLPIELVVAGGGSKNLTLMRELNTRCRGLRLRRSDELQLPSQSREAMVFALLAWWHHLGYPGNAPAITGAQHEVVLGVRVNPA.

9–16 (GTSADGVD) is a binding site for ATP.

This sequence belongs to the anhydro-N-acetylmuramic acid kinase family.

It catalyses the reaction 1,6-anhydro-N-acetyl-beta-muramate + ATP + H2O = N-acetyl-D-muramate 6-phosphate + ADP + H(+). It participates in amino-sugar metabolism; 1,6-anhydro-N-acetylmuramate degradation. It functions in the pathway cell wall biogenesis; peptidoglycan recycling. Catalyzes the specific phosphorylation of 1,6-anhydro-N-acetylmuramic acid (anhMurNAc) with the simultaneous cleavage of the 1,6-anhydro ring, generating MurNAc-6-P. Is required for the utilization of anhMurNAc either imported from the medium or derived from its own cell wall murein, and thus plays a role in cell wall recycling. This is Anhydro-N-acetylmuramic acid kinase from Synechococcus sp. (strain CC9311).